The sequence spans 482 residues: tRNA sulfurtransferase (482 aa).

The region spanning 61–165 is the THUMP domain; sequence DVTLSVLTQT…NDKLNLIIAR (105 aa). Residues 183–184, Lys-265, Gly-287, and Gln-296 contribute to the ATP site; that span reads LI. Residues Cys-344 and Cys-456 are joined by a disulfide bond. In terms of domain architecture, Rhodanese spans 404 to 482; sequence LGSDVVVLDI…GYKNVKVYRP (79 aa). The active-site Cysteine persulfide intermediate is Cys-456.

The protein belongs to the ThiI family.

The protein localises to the cytoplasm. It catalyses the reaction [ThiI sulfur-carrier protein]-S-sulfanyl-L-cysteine + a uridine in tRNA + 2 reduced [2Fe-2S]-[ferredoxin] + ATP + H(+) = [ThiI sulfur-carrier protein]-L-cysteine + a 4-thiouridine in tRNA + 2 oxidized [2Fe-2S]-[ferredoxin] + AMP + diphosphate. The catalysed reaction is [ThiS sulfur-carrier protein]-C-terminal Gly-Gly-AMP + S-sulfanyl-L-cysteinyl-[cysteine desulfurase] + AH2 = [ThiS sulfur-carrier protein]-C-terminal-Gly-aminoethanethioate + L-cysteinyl-[cysteine desulfurase] + A + AMP + 2 H(+). It participates in cofactor biosynthesis; thiamine diphosphate biosynthesis. Its function is as follows. Catalyzes the ATP-dependent transfer of a sulfur to tRNA to produce 4-thiouridine in position 8 of tRNAs, which functions as a near-UV photosensor. Also catalyzes the transfer of sulfur to the sulfur carrier protein ThiS, forming ThiS-thiocarboxylate. This is a step in the synthesis of thiazole, in the thiamine biosynthesis pathway. The sulfur is donated as persulfide by IscS. The polypeptide is tRNA sulfurtransferase (Aliivibrio fischeri (strain MJ11) (Vibrio fischeri)).